Here is a 3412-residue protein sequence, read N- to C-terminus: Genome polyprotein (3412 aa).

Topologically, residues 1–104 are cytoplasmic; sequence MSGRKAQGKT…LSSRKRRSNE (104 aa). Positions 38-72 are hydrophobic; homodimerization of capsid protein C; sequence PGPSRGVQGFIFFFLFNILTGKKLTTHLKRLWRML. Positions 102 to 121 are cleaved as a propeptide — ER anchor for the capsid protein C, removed in mature form by serine protease NS3; that stretch reads SNEMAMMPLLILSMVILAGG. A helical transmembrane segment spans residues 105–125; that stretch reads MAMMPLLILSMVILAGGVTLV. Residues 126–244 are Extracellular-facing; the sequence is RKNRWLLLNV…GERQLQKIER (119 aa). Asn-134 and Asn-150 each carry an N-linked (GlcNAc...) asparagine; by host glycan. A helical membrane pass occupies residues 245-265; it reads WLVRNPFFAITALAIAYLVGN. Residues 266 to 270 lie on the Cytoplasmic side of the membrane; that stretch reads NMTQR. A helical transmembrane segment spans residues 271 to 285; sequence VVIALLVLAVGPAYS. The Extracellular segment spans residues 286-730; that stretch reads AHCIGITDRD…TVFGSAFQGL (445 aa). 8 disulfides stabilise this stretch: Cys-288-Cys-315, Cys-345-Cys-401, Cys-345-Cys-406, Cys-359-Cys-390, Cys-377-Cys-401, Cys-377-Cys-406, Cys-467-Cys-568, and Cys-585-Cys-615. The tract at residues 383 to 396 is fusion peptide; it reads DRGWGNGCGLFGKG. The chain crosses the membrane as a helical span at residues 731-751; that stretch reads FGGLSWITKVIMGAVLIWVGI. The Extracellular segment spans residues 752-757; it reads NTRNMT. The helical transmembrane segment at 758–778 threads the bilayer; it reads MSMSMILVGVIMMFLSLGVGA. Residues 779–1132 are Extracellular-facing; sequence DQGCAVNFGK…LVRSWVTAGE (354 aa). Intrachain disulfides connect Cys-782-Cys-793, Cys-833-Cys-921, Cys-957-Cys-1002, Cys-1058-Cys-1107, Cys-1069-Cys-1091, and Cys-1090-Cys-1094. N-linked (GlcNAc...) asparagine; by host glycosylation is found at Asn-908 and Asn-986. The helical transmembrane segment at 1133-1153 threads the bilayer; it reads VHAVPFGLVSMMIAMEVVLRK. Over 1154-1201 the chain is Cytoplasmic; sequence RQGPKQMLVGGIILLGAMLVGQVTVLDLVKLIVAVGLHFHEINNGGDA. The chain crosses the membrane as a helical span at residues 1202-1222; that stretch reads MYMALIASFSIRPGLLVGFGL. Topologically, residues 1223–1287 are lumenal; sequence RTLWSPRERL…VLPLMALLTP (65 aa). The chain crosses the membrane as a helical span at residues 1288–1308; the sequence is VTMHEVRMATMLFCTVVIVGV. Topologically, residues 1309 to 1355 are cytoplasmic; sequence LHQNAKDTSMQKTIPIVALTLTSYMGLTQPFLGLCAYMSTQVFGRRS. A helical transmembrane segment spans residues 1356–1376; the sequence is IPVNEALAAAGLVGVLAGLAF. Topologically, residues 1377-1378 are lumenal; it reads QD. Residues 1379 to 1399 traverse the membrane as a helical segment; that stretch reads MENFLGPIAVGGILMMLVSVA. The Cytoplasmic portion of the chain corresponds to 1400–1456; that stretch reads GKVDGLELKKLGEVSWEEEAEISGSSSRYDVALSEQGEFKLLSEDKVPWDQIVMTSL. The interacts with and activates NS3 protease stretch occupies residues 1407–1446; it reads LKKLGEVSWEEEAEISGSSSRYDVALSEQGEFKLLSEDKV. The segment at residues 1457–1477 is an intramembrane region (helical); the sequence is ALVGAAIHPFALLLVLGGWVL. The Cytoplasmic segment spans residues 1478-2157; that stretch reads HIKGARRSGD…RNALSMMPEA (680 aa). Positions 1485-1665 constitute a Peptidase S7 domain; the sequence is SGDVLWDIPT…EVKEESKEEL (181 aa). Residues His-1537, Asp-1561, and Ser-1622 each act as charge relay system; for serine protease NS3 activity in the active site. The region spanning 1669-1825 is the Helicase ATP-binding domain; it reads PTMLKKGMTT…HSNGEIEDVQ (157 aa). The important for RNA-binding stretch occupies residues 1673–1676; the sequence is KKGM. 1682–1689 is a binding site for ATP; sequence FHPGAGKT. The DEAH box motif lies at 1773 to 1776; sequence DEAH. One can recognise a Helicase C-terminal domain in the interval 1820-1997; that stretch reads EIEDVQTDIP…VRGGMVAPLY (178 aa). Lys-1877 is subject to N6-acetyllysine; by host. Residues 1942–1961 are disordered; the sequence is AAQRRGRIGRNPNRDGDSYY. Residues 2158–2178 traverse the membrane as a helical segment; sequence MTIVMLFILAGLLTSGMVIFF. The Lumenal portion of the chain corresponds to 2179–2186; that stretch reads MSPKGMSR. The helical intramembrane region spans 2187–2207; sequence MSMAMGTMAGSGYLMFLGGVK. Topologically, residues 2208–2209 are lumenal; sequence PT. A helical transmembrane segment spans residues 2210-2230; it reads HISYVMLIFFVLMVVIIPEPG. Residues 2231 to 2241 lie on the Cytoplasmic side of the membrane; it reads QQRTIQDNQVA. Residues 2242-2262 form a helical membrane-spanning segment; the sequence is YLIIGILTLLSIVAANELGML. The Lumenal portion of the chain corresponds to 2263–2293; that stretch reads EKTKEDFFGRRNIATSGGTIPWSWPDLDLKP. Positions 2294-2314 form an intramembrane region, helical; that stretch reads GAAWTVYVGIVTMLSPMLHHW. Residues 2315–2360 lie on the Lumenal side of the membrane; that stretch reads IKVEYGNLSLSGIAQSASVLSFMDKGIPFMKMNISVVILLVSGWNS. Residues 2361–2380 traverse the membrane as a helical segment; sequence ITVIPLLCGVGGAMLHWTLI. The Cytoplasmic portion of the chain corresponds to 2381-2421; the sequence is LPGIKAQQSKLAQKRVFHGVAKNPVVDGNPTADIEEAPEMP. Residues 2422 to 2442 form a helical membrane-spanning segment; that stretch reads ALYEKKLALYLLLALSLMSVA. Residues 2443 to 2445 lie on the Lumenal side of the membrane; it reads MCR. A helical transmembrane segment spans residues 2446–2466; the sequence is TPFSLAEGIVLSSAALGPLIE. The Cytoplasmic segment spans residues 2467–3411; that stretch reads GNTSLLWNGP…VDADLQPGEL (945 aa). The 265-residue stretch at 2508–2772 folds into the mRNA cap 0-1 NS5-type MT domain; the sequence is GSASGKTLGE…DVILPIGTRS (265 aa). Residue Ser-2563 coordinates S-adenosyl-L-methionine. Ser-2563 carries the post-translational modification Phosphoserine. Lys-2568 functions as the For 2'-O-MTase activity in the catalytic mechanism. S-adenosyl-L-methionine is bound by residues Gly-2593, Trp-2594, Thr-2611, Leu-2612, Asp-2638, and Ile-2639. Residue Asp-2653 is the For 2'-O-MTase activity of the active site. Ile-2654 contacts S-adenosyl-L-methionine. Catalysis depends on for 2'-O-MTase activity residues Lys-2689 and Glu-2725. Tyr-2727 contributes to the S-adenosyl-L-methionine binding site. The short motif at 2879–2912 is the Nuclear localization signal element; sequence RKIMKVVNRWLFRHLAREKNPRLCTKEEFIAKVR. Residues Glu-2946, His-2950, Cys-2955, and Cys-2958 each contribute to the Zn(2+) site. The region spanning 3036-3188 is the RdRp catalytic domain; the sequence is GGFYADDTAG…RPVDDRFGLA (153 aa). The Zn(2+) site is built by His-3223, Cys-3239, and Cys-3358.

In the N-terminal section; belongs to the class I-like SAM-binding methyltransferase superfamily. mRNA cap 0-1 NS5-type methyltransferase family. In terms of assembly, homodimer. Interacts (via N-terminus) with host EXOC1 (via C-terminus); this interaction results in EXOC1 degradation through the proteasome degradation pathway. As to quaternary structure, forms heterodimers with envelope protein E in the endoplasmic reticulum and Golgi. Homodimer; in the endoplasmic reticulum and Golgi. Interacts with protein prM. Interacts with non-structural protein 1. In terms of assembly, homodimer; Homohexamer when secreted. Interacts with envelope protein E. As to quaternary structure, interacts (via N-terminus) with serine protease NS3. Forms a heterodimer with serine protease NS3. May form homooligomers. In terms of assembly, forms a heterodimer with NS2B. Interacts with non-structural protein 2A (via N-terminus). Interacts with NS4B. Interacts with unphosphorylated RNA-directed RNA polymerase NS5; this interaction stimulates RNA-directed RNA polymerase NS5 guanylyltransferase activity. NS3 interacts with host PDCD6IP; this interaction contributes to virion release. As to quaternary structure, interacts with serine protease NS3. Homodimer. Interacts with host STAT2; this interaction prevents the establishment of cellular antiviral state. Interacts with serine protease NS3. Interacts with host TRIM23; this interaction leads to NS5 ubiquitination. Post-translationally, specific enzymatic cleavages in vivo yield mature proteins. The nascent capsid protein C contains a C-terminal hydrophobic domain that act as a signal sequence for translocation of prM into the lumen of the ER. Mature capsid protein C is cleaved at a site upstream of this hydrophobic domain by NS3. prM is cleaved in post-Golgi vesicles by a host furin, releasing the mature small envelope protein M, and peptide pr. Non-structural protein 2A-alpha, a C-terminally truncated form of non-structural protein 2A, results from partial cleavage by NS3. Specific enzymatic cleavages in vivo yield mature proteins peptide 2K acts as a signal sequence and is removed from the N-terminus of NS4B by the host signal peptidase in the ER lumen. Signal cleavage at the 2K-4B site requires a prior NS3 protease-mediated cleavage at the 4A-2K site. Cleaved in post-Golgi vesicles by a host furin, releasing the mature small envelope protein M, and peptide pr. This cleavage is incomplete as up to 30% of viral particles still carry uncleaved prM. In terms of processing, N-glycosylated. Post-translationally, N-glycosylated. The excreted form is glycosylated and this is required for efficient secretion of the protein from infected cells. Polyubiquitinated; ubiquitination is probably mediated by host TRIM23 and is prerequisite for NS5-STAT2 interaction. NS5 is not ISGylated or sumoylated. In terms of processing, acetylated by host KAT5. Acetylation modulates NS3 RNA-binding and unwinding activities and plays an important positive role for viral replication. Post-translationally, phosphorylated on serines residues. This phosphorylation may trigger NS5 nuclear localization.

It localises to the virion. It is found in the host nucleus. The protein resides in the host cytoplasm. The protein localises to the host perinuclear region. Its subcellular location is the secreted. It localises to the virion membrane. It is found in the host endoplasmic reticulum membrane. It catalyses the reaction Selective hydrolysis of -Xaa-Xaa-|-Yaa- bonds in which each of the Xaa can be either Arg or Lys and Yaa can be either Ser or Ala.. The enzyme catalyses RNA(n) + a ribonucleoside 5'-triphosphate = RNA(n+1) + diphosphate. The catalysed reaction is a ribonucleoside 5'-triphosphate + H2O = a ribonucleoside 5'-diphosphate + phosphate + H(+). It carries out the reaction ATP + H2O = ADP + phosphate + H(+). It catalyses the reaction a 5'-end (5'-triphosphoguanosine)-ribonucleoside in mRNA + S-adenosyl-L-methionine = a 5'-end (N(7)-methyl 5'-triphosphoguanosine)-ribonucleoside in mRNA + S-adenosyl-L-homocysteine. The enzyme catalyses a 5'-end (N(7)-methyl 5'-triphosphoguanosine)-ribonucleoside in mRNA + S-adenosyl-L-methionine = a 5'-end (N(7)-methyl 5'-triphosphoguanosine)-(2'-O-methyl-ribonucleoside) in mRNA + S-adenosyl-L-homocysteine + H(+). Its function is as follows. Plays a role in virus budding by binding to the cell membrane and gathering the viral RNA into a nucleocapsid that forms the core of a mature virus particle. During virus entry, may induce genome penetration into the host cytoplasm after hemifusion induced by the surface proteins. Can migrate to the cell nucleus where it modulates host functions. Inhibits RNA silencing by interfering with host Dicer. In terms of biological role, prevents premature fusion activity of envelope proteins in trans-Golgi by binding to envelope protein E at pH6.0. After virion release in extracellular space, gets dissociated from E dimers. Functionally, acts as a chaperone for envelope protein E during intracellular virion assembly by masking and inactivating envelope protein E fusion peptide. prM is the only viral peptide matured by host furin in the trans-Golgi network probably to avoid catastrophic activation of the viral fusion activity in acidic Golgi compartment prior to virion release. prM-E cleavage is inefficient, and many virions are only partially matured. These uncleaved prM would play a role in immune evasion. Its function is as follows. May play a role in virus budding. Exerts cytotoxic effects by activating a mitochondrial apoptotic pathway through M ectodomain. May display a viroporin activity. Binds to host cell surface receptor and mediates fusion between viral and cellular membranes. Envelope protein is synthesized in the endoplasmic reticulum in the form of heterodimer with protein prM. They play a role in virion budding in the ER, and the newly formed immature particle is covered with 60 spikes composed of heterodimer between precursor prM and envelope protein E. The virion is transported to the Golgi apparatus where the low pH causes dissociation of PrM-E heterodimers and formation of E homodimers. prM-E cleavage is inefficient, and many virions are only partially matured. These uncleaved prM would play a role in immune evasion. In terms of biological role, involved in immune evasion, pathogenesis and viral replication. Once cleaved off the polyprotein, is targeted to three destinations: the viral replication cycle, the plasma membrane and the extracellular compartment. Essential for viral replication. Required for formation of the replication complex and recruitment of other non-structural proteins to the ER-derived membrane structures. Excreted as a hexameric lipoparticle that plays a role against host immune response. Antagonizing the complement function. Binds to the host macrophages and dendritic cells. Inhibits signal transduction originating from Toll-like receptor 3 (TLR3). Functionally, component of the viral RNA replication complex that functions in virion assembly and antagonizes the host immune response. Its function is as follows. Required cofactor for the serine protease function of NS3. May have membrane-destabilizing activity and form viroporins. Displays three enzymatic activities: serine protease, NTPase and RNA helicase. NS3 serine protease, in association with NS2B, performs its autocleavage and cleaves the polyprotein at dibasic sites in the cytoplasm: C-prM, NS2A-NS2B, NS2B-NS3, NS3-NS4A, NS4A-2K and NS4B-NS5. NS3 RNA helicase binds RNA and unwinds dsRNA in the 3' to 5' direction. Also plays a role in virus assembly. In terms of biological role, regulates the ATPase activity of the NS3 helicase activity. NS4A allows NS3 helicase to conserve energy during unwinding. Functionally, functions as a signal peptide for NS4B and is required for the interferon antagonism activity of the latter. Its function is as follows. Induces the formation of ER-derived membrane vesicles where the viral replication takes place. Inhibits interferon (IFN)-induced host STAT1 phosphorylation and nuclear translocation, thereby preventing the establishment of cellular antiviral state by blocking the IFN-alpha/beta pathway. Replicates the viral (+) and (-) RNA genome, and performs the capping of genomes in the cytoplasm. NS5 methylates viral RNA cap at guanine N-7 and ribose 2'-O positions. Besides its role in RNA genome replication, also prevents the establishment of cellular antiviral state by blocking the interferon-alpha/beta (IFN-alpha/beta) signaling pathway. IFN-I induces binding of NS5 to host IFN-activated transcription factor STAT2, preventing its transcriptional activity. Host TRIM23 is the E3 ligase that interacts with and polyubiquitinates NS5 to promote its binding to STAT2 and trigger IFN-I signaling inhibition. The sequence is that of Genome polyprotein from Yellow fever virus (isolate Ethiopia/Couma/1961) (YFV).